A 148-amino-acid chain; its full sequence is RING finger protein 24 (148 aa).

A helical membrane pass occupies residues 24–44 (IYIVVFGTAIFVFILSLLFCC). The segment at 78 to 119 (CAVCLEDFKPRDELGICPCKHAFHRKCLIKWLEVRKVCPLCN) adopts an RING-type zinc-finger fold.

In terms of assembly, interacts with TRPC1, TRPC3, TRPC4, TRPC5, TRPC6 and TRPC7.

The protein localises to the golgi apparatus membrane. Its function is as follows. May play a role in TRPCs intracellular trafficking. The chain is RING finger protein 24 (RNF24) from Homo sapiens (Human).